A 240-amino-acid polypeptide reads, in one-letter code: EF-hand domain-containing protein D1 (240 aa).

The disordered stretch occupies residues 17–54 (EVRAETDQGDPQPAPCDAPAGHPEPEPPARAPTASADS). 2 consecutive EF-hand domains span residues 91–126 (RLLK…LGAP) and 127–162 (QTHL…AAAG). Ca(2+)-binding residues include Asp104, Asp108, Glu115, Asp140, Asp142, Asp144, Lys146, and Glu151.

Widely expressed. Highest expression in testis, followed by ovary, kidney, cerebrum, cerebellum, heart, liver, and spleen. In the cerebrum and cerebellum, undetectable at embryonic stages, expression increases after birth up to adult stage. In adult CNS, detected in neurons of the cerebellum, cerebrum and hippocampus formation, including dentate gyrus and Cornu Ammonis, but not in the white matter. In the testis, expressed in spermatocytes, but not in spermatogonia nor in interstitial cells. In ovary, found predominantly in mural granulosa cells and those of the cumulus oophorus. In kidney, expressed in collecting ducts, but not in glomeruli. Not detected in skeletal muscle.

It localises to the mitochondrion inner membrane. Functionally, acts as a calcium sensor for mitochondrial flash (mitoflash) activation, an event characterized by stochastic bursts of superoxide production. May play a role in neuronal differentiation. This is EF-hand domain-containing protein D1 (Efhd1) from Mus musculus (Mouse).